Consider the following 146-residue polypeptide: MQKKIIVYTDGACSGNPGKGGWGALLMYGASTREISGYSPATTNNRMELSAAIEALETLKEPCIVHLYSDSSYLVNAINEGWLKRWTANNWKTAAKKSVENIDLWQKILTLIKLHDVTFHKVKGHSDNPYNNRCDELARQAIKNNR.

An RNase H type-1 domain is found at 1–143 (MQKKIIVYTD…CDELARQAIK (143 aa)). Mg(2+) contacts are provided by aspartate 10, glutamate 48, aspartate 70, and aspartate 135.

This sequence belongs to the RNase H family. In terms of assembly, monomer. Requires Mg(2+) as cofactor.

It localises to the cytoplasm. It carries out the reaction Endonucleolytic cleavage to 5'-phosphomonoester.. Its function is as follows. Endonuclease that specifically degrades the RNA of RNA-DNA hybrids. The protein is Ribonuclease H of Chlorobium phaeobacteroides (strain DSM 266 / SMG 266 / 2430).